A 428-amino-acid chain; its full sequence is C4-dicarboxylate transport protein (428 aa).

9 helical membrane-spanning segments follow: residues 8–28, 44–64, 76–96, 142–162, 184–204, 222–242, 289–309, 326–346, and 352–372; these read SLYV…HFYP, LIKM…IAGM, VALL…LIIV, IGAF…LFGF, VIFG…FGAM, LIIC…GSIA, VVGL…SIYL, IFHQ…AAGV, and IVLA…LALI.

This sequence belongs to the dicarboxylate/amino acid:cation symporter (DAACS) (TC 2.A.23) family.

Its subcellular location is the cell inner membrane. In terms of biological role, responsible for the transport of dicarboxylates such as succinate, fumarate, and malate from the periplasm across the membrane. This Klebsiella pneumoniae (strain 342) protein is C4-dicarboxylate transport protein.